A 306-amino-acid polypeptide reads, in one-letter code: Aspartate carbamoyltransferase catalytic subunit (306 aa).

Carbamoyl phosphate-binding residues include Arg55 and Thr56. Lys84 is a binding site for L-aspartate. The carbamoyl phosphate site is built by Arg105, His133, and Gln136. L-aspartate is bound by residues Arg166 and Arg227. Carbamoyl phosphate is bound by residues Leu265 and Pro266.

It belongs to the aspartate/ornithine carbamoyltransferase superfamily. ATCase family. Heterododecamer (2C3:3R2) of six catalytic PyrB chains organized as two trimers (C3), and six regulatory PyrI chains organized as three dimers (R2).

It carries out the reaction carbamoyl phosphate + L-aspartate = N-carbamoyl-L-aspartate + phosphate + H(+). It participates in pyrimidine metabolism; UMP biosynthesis via de novo pathway; (S)-dihydroorotate from bicarbonate: step 2/3. Its function is as follows. Catalyzes the condensation of carbamoyl phosphate and aspartate to form carbamoyl aspartate and inorganic phosphate, the committed step in the de novo pyrimidine nucleotide biosynthesis pathway. This is Aspartate carbamoyltransferase catalytic subunit from Neisseria meningitidis serogroup C (strain 053442).